The chain runs to 259 residues: Tryptophan synthase alpha chain (259 aa).

Active-site proton acceptor residues include Glu48 and Asp59.

The protein belongs to the TrpA family. As to quaternary structure, tetramer of two alpha and two beta chains.

The enzyme catalyses (1S,2R)-1-C-(indol-3-yl)glycerol 3-phosphate + L-serine = D-glyceraldehyde 3-phosphate + L-tryptophan + H2O. Its pathway is amino-acid biosynthesis; L-tryptophan biosynthesis; L-tryptophan from chorismate: step 5/5. Functionally, the alpha subunit is responsible for the aldol cleavage of indoleglycerol phosphate to indole and glyceraldehyde 3-phosphate. The protein is Tryptophan synthase alpha chain of Syntrophomonas wolfei subsp. wolfei (strain DSM 2245B / Goettingen).